The following is a 258-amino-acid chain: MNATHILESHEANEQHHATNRSYWEVTYNILVIMSIVFSMATYLILDKDRFEKNPLLRFAIILLPLSCSAIQYLFLLYTNWKSNYEPEGTLHKALYYFFNVLLIAFAIISILSIIVLPINGWKGDDLLSSIVLPSFFIPPTYLLSTSCCLVPGQIGFTDTGINVLIDILILLCPLVSLVLIPEEPKYRLIPAILFPVLILIRLLREKYYPSGKSALPTAPWRVAVFVLILIIAVFAYALMVWGSMVILNNHFGLLDIS.

It belongs to the UPF0328 family.

This Encephalitozoon cuniculi (strain GB-M1) (Microsporidian parasite) protein is UPF0328 protein ECU07_0060.